Reading from the N-terminus, the 64-residue chain is DNA-directed RNA polymerase subunit Rpo10 (64 aa).

Zn(2+)-binding residues include Cys7, Cys10, Cys45, and Cys46.

The protein belongs to the archaeal Rpo10/eukaryotic RPB10 RNA polymerase subunit family. Part of the RNA polymerase complex. Zn(2+) serves as cofactor.

Its subcellular location is the cytoplasm. It carries out the reaction RNA(n) + a ribonucleoside 5'-triphosphate = RNA(n+1) + diphosphate. Its function is as follows. DNA-dependent RNA polymerase (RNAP) catalyzes the transcription of DNA into RNA using the four ribonucleoside triphosphates as substrates. This is DNA-directed RNA polymerase subunit Rpo10 from Haloquadratum walsbyi (strain DSM 16790 / HBSQ001).